Reading from the N-terminus, the 386-residue chain is Pepsin A (386 aa).

The first 15 residues, 1–15 (MKWLLLLSLVALSEC), serve as a signal peptide directing secretion. Residues 16 to 60 (YIYKVPLVKKKSLRKNLMEQGLLQDYLKTHSINPASKYLKEAASM) constitute a propeptide, activation peptide. The region spanning 74–383 (YFGTIGIGTP…DRGNNQVGLA (310 aa)) is the Peptidase A1 domain. The active site involves Asp-92. Disulfide bonds link Cys-105/Cys-110 and Cys-266/Cys-270. Residue Asp-275 is part of the active site. A disulfide bridge links Cys-309 with Cys-342.

This sequence belongs to the peptidase A1 family.

Its subcellular location is the secreted. The catalysed reaction is Preferential cleavage: hydrophobic, preferably aromatic, residues in P1 and P1' positions. Cleaves 1-Phe-|-Val-2, 4-Gln-|-His-5, 13-Glu-|-Ala-14, 14-Ala-|-Leu-15, 15-Leu-|-Tyr-16, 16-Tyr-|-Leu-17, 23-Gly-|-Phe-24, 24-Phe-|-Phe-25 and 25-Phe-|-Tyr-26 bonds in the B chain of insulin.. Shows particularly broad specificity; although bonds involving phenylalanine and leucine are preferred, many others are also cleaved to some extent. This chain is Pepsin A (PGA), found in Rhinolophus ferrumequinum (Greater horseshoe bat).